A 483-amino-acid polypeptide reads, in one-letter code: Trehalose-6-phosphate synthase (483 aa).

A D-glucose 6-phosphate-binding site is contributed by Arg-22. 42-43 (GG) lines the UDP-alpha-D-glucose pocket. The D-glucose 6-phosphate site is built by Tyr-94 and Asp-148. Positions 290 and 295 each coordinate UDP-alpha-D-glucose. Arg-328 contacts D-glucose 6-phosphate. 393–397 (LVAKE) contacts UDP-alpha-D-glucose.

The protein belongs to the glycosyltransferase 20 family. In terms of assembly, homotetramer.

The enzyme catalyses ADP-alpha-D-glucose + D-glucose 6-phosphate = alpha,alpha-trehalose 6-phosphate + ADP + H(+). It catalyses the reaction CDP-alpha-D-glucose + D-glucose 6-phosphate = alpha,alpha-trehalose 6-phosphate + CDP + H(+). The catalysed reaction is GDP-alpha-D-glucose + D-glucose 6-phosphate = alpha,alpha-trehalose 6-phosphate + GDP + H(+). It carries out the reaction TDP-alpha-D-glucose + D-glucose 6-phosphate = 5-methyl-UDP + alpha,alpha-trehalose 6-phosphate + H(+). The enzyme catalyses D-glucose 6-phosphate + UDP-alpha-D-glucose = alpha,alpha-trehalose 6-phosphate + UDP + H(+). Its pathway is glycan biosynthesis; trehalose biosynthesis. Functionally, probably involved in the osmoprotection via the biosynthesis of trehalose and in the production of glycogen and alpha-glucan via the TreS-Pep2 branch involved in the biosynthesis of maltose-1-phosphate (M1P). Catalyzes the transfer of glucose from UDP-glucose (UDP-Glc) to D-glucose 6-phosphate (Glc-6-P) to form trehalose-6-phosphate. Probably also able to use ADP-Glc, CDP-Glc, GDP-Glc and TDP-Glc as glucosyl donors. In Mycobacterium sp. (strain JLS), this protein is Trehalose-6-phosphate synthase.